The chain runs to 333 residues: Homeobox protein engrailed-1 (333 aa).

The segment covering 1-14 has biased composition (basic and acidic residues); that stretch reads MEEPPEGHGHHRDA. Disordered regions lie at residues 1-184 and 226-247; these read MEEP…AAKY and RPSS…DKRP. A compositionally biased stretch (gly residues) spans 20–31; that stretch reads ANGGGGGGGGSD. Over residues 38-66 the composition is skewed to pro residues; the sequence is SPSPAPASPAAPCPLPLPRRRPPPPPPPR. Residues 94–104 show a composition bias toward gly residues; sequence TGAGGGGGGGG. Residues 144-173 are compositionally biased toward low complexity; it reads DGSAPAGTAAKANPGTAAGAAGAAGAAKAQ. Positions 244–303 form a DNA-binding region, homeobox; the sequence is DKRPRTAFTAEQLQRLKAEFQANRYITEQRRQSLAQELSLNESRVKIWFQNKRAKIKKAT.

Belongs to the engrailed homeobox family.

It localises to the nucleus. Functionally, required for proper formation of the apical ectodermal ridge and correct dorsal-ventral patterning in the limb. The chain is Homeobox protein engrailed-1 (EN1) from Gallus gallus (Chicken).